The primary structure comprises 909 residues: Alanine--tRNA ligase (909 aa).

Residues histidine 600, histidine 604, cysteine 704, and histidine 708 each contribute to the Zn(2+) site.

Belongs to the class-II aminoacyl-tRNA synthetase family. Zn(2+) serves as cofactor.

It is found in the cytoplasm. It catalyses the reaction tRNA(Ala) + L-alanine + ATP = L-alanyl-tRNA(Ala) + AMP + diphosphate. Catalyzes the attachment of alanine to tRNA(Ala) in a two-step reaction: alanine is first activated by ATP to form Ala-AMP and then transferred to the acceptor end of tRNA(Ala). Also edits incorrectly charged Ser-tRNA(Ala) and Gly-tRNA(Ala) via its editing domain. In Staphylothermus marinus (strain ATCC 43588 / DSM 3639 / JCM 9404 / F1), this protein is Alanine--tRNA ligase.